We begin with the raw amino-acid sequence, 647 residues long: DNA mismatch repair protein MutL (647 aa).

Disordered regions lie at residues 356–391 (EGSQ…SSIS) and 407–428 (PRPQ…EALP). Positions 413-423 (LRPQYQGSVTS) are enriched in polar residues.

The protein belongs to the DNA mismatch repair MutL/HexB family.

In terms of biological role, this protein is involved in the repair of mismatches in DNA. It is required for dam-dependent methyl-directed DNA mismatch repair. May act as a 'molecular matchmaker', a protein that promotes the formation of a stable complex between two or more DNA-binding proteins in an ATP-dependent manner without itself being part of a final effector complex. This Citrifermentans bemidjiense (strain ATCC BAA-1014 / DSM 16622 / JCM 12645 / Bem) (Geobacter bemidjiensis) protein is DNA mismatch repair protein MutL.